Consider the following 151-residue polypeptide: Lipoprotein signal peptidase (151 aa).

The next 2 membrane-spanning stretches (helical) occupy residues 54 to 74 and 83 to 103; these read GQMW…IYLI and LLKI…IDRL. Catalysis depends on residues Asp110 and Asp125. The helical transmembrane segment at 120–140 threads the bilayer; that stretch reads IFNIADSALTIGVGLFLLNIL.

It belongs to the peptidase A8 family.

It is found in the cell membrane. It carries out the reaction Release of signal peptides from bacterial membrane prolipoproteins. Hydrolyzes -Xaa-Yaa-Zaa-|-(S,diacylglyceryl)Cys-, in which Xaa is hydrophobic (preferably Leu), and Yaa (Ala or Ser) and Zaa (Gly or Ala) have small, neutral side chains.. Its pathway is protein modification; lipoprotein biosynthesis (signal peptide cleavage). Functionally, this protein specifically catalyzes the removal of signal peptides from prolipoproteins. This is Lipoprotein signal peptidase from Shouchella clausii (strain KSM-K16) (Alkalihalobacillus clausii).